The chain runs to 447 residues: MREIVHLQTGQCGNQIGAAFWQTISGEHGLDGSGVYNGTSDLQLERMNVYFNEASGNKFVPRAVLVDLEPGTMDAVRAGPFGQLFRPDNFVFGQSGAGNNWAKGHYTEGAELVDQVLDVVRREAEGCDCLQGFQITHSLGGGTGAGMGTLLISKIREEFPDRMMATFSVVPSPKVSDTVVEPYNATLSIHQLVENSDETFCIDNEALYDICMRTLKLNNPSYGDLNHLVSAVMSGVTTCLRFPGQLNSDLRKLAVNMVPFPRLHFFMVGFAPLTSRGAHSFRAVTVPELTQQMFDPKNMMAASDFRNGRYLTCSAYFRGKVSMKEVEDQMRNVQNKNSSYFVEWIPNNVQTALCSVPPRGLKMSATFVGNSTSIQELFKRIGDQFTAMFRRKAFLHWYTGEGMDEMEFTEAESNMNDLVSEYQQYQEASISEGEEEYDEEAPLEAEE.

8 residues coordinate GTP: glutamine 11, glutamate 69, serine 138, glycine 142, threonine 143, glycine 144, asparagine 204, and asparagine 226. Residue glutamate 69 coordinates Mg(2+). Residues 425 to 447 form a disordered region; that stretch reads YQEASISEGEEEYDEEAPLEAEE. Positions 432 to 447 are enriched in acidic residues; that stretch reads EGEEEYDEEAPLEAEE.

This sequence belongs to the tubulin family. As to quaternary structure, dimer of alpha and beta chains. A typical microtubule is a hollow water-filled tube with an outer diameter of 25 nm and an inner diameter of 15 nM. Alpha-beta heterodimers associate head-to-tail to form protofilaments running lengthwise along the microtubule wall with the beta-tubulin subunit facing the microtubule plus end conferring a structural polarity. Microtubules usually have 13 protofilaments but different protofilament numbers can be found in some organisms and specialized cells. Requires Mg(2+) as cofactor.

It localises to the cytoplasm. Its subcellular location is the cytoskeleton. Tubulin is the major constituent of microtubules, a cylinder consisting of laterally associated linear protofilaments composed of alpha- and beta-tubulin heterodimers. Microtubules grow by the addition of GTP-tubulin dimers to the microtubule end, where a stabilizing cap forms. Below the cap, tubulin dimers are in GDP-bound state, owing to GTPase activity of alpha-tubulin. This is Tubulin beta chain (tubB) from Phaeosphaeria nodorum (strain SN15 / ATCC MYA-4574 / FGSC 10173) (Glume blotch fungus).